A 352-amino-acid polypeptide reads, in one-letter code: 4-hydroxy-3-methylbut-2-enyl diphosphate reductase (352 aa).

Cys-36 lines the [4Fe-4S] cluster pocket. (2E)-4-hydroxy-3-methylbut-2-enyl diphosphate is bound by residues His-76 and His-114. Positions 76 and 114 each coordinate dimethylallyl diphosphate. Residues His-76 and His-114 each coordinate isopentenyl diphosphate. Cys-136 contacts [4Fe-4S] cluster. His-164 is a (2E)-4-hydroxy-3-methylbut-2-enyl diphosphate binding site. His-164 serves as a coordination point for dimethylallyl diphosphate. His-164 serves as a coordination point for isopentenyl diphosphate. Glu-166 acts as the Proton donor in catalysis. Residue Thr-204 coordinates (2E)-4-hydroxy-3-methylbut-2-enyl diphosphate. Cys-234 lines the [4Fe-4S] cluster pocket. Positions 262, 263, 264, and 309 each coordinate (2E)-4-hydroxy-3-methylbut-2-enyl diphosphate. Dimethylallyl diphosphate-binding residues include Ser-262, Ser-263, Asn-264, and Ser-309. 4 residues coordinate isopentenyl diphosphate: Ser-262, Ser-263, Asn-264, and Ser-309.

Belongs to the IspH family. [4Fe-4S] cluster is required as a cofactor.

The catalysed reaction is isopentenyl diphosphate + 2 oxidized [2Fe-2S]-[ferredoxin] + H2O = (2E)-4-hydroxy-3-methylbut-2-enyl diphosphate + 2 reduced [2Fe-2S]-[ferredoxin] + 2 H(+). It catalyses the reaction dimethylallyl diphosphate + 2 oxidized [2Fe-2S]-[ferredoxin] + H2O = (2E)-4-hydroxy-3-methylbut-2-enyl diphosphate + 2 reduced [2Fe-2S]-[ferredoxin] + 2 H(+). The protein operates within isoprenoid biosynthesis; dimethylallyl diphosphate biosynthesis; dimethylallyl diphosphate from (2E)-4-hydroxy-3-methylbutenyl diphosphate: step 1/1. Its pathway is isoprenoid biosynthesis; isopentenyl diphosphate biosynthesis via DXP pathway; isopentenyl diphosphate from 1-deoxy-D-xylulose 5-phosphate: step 6/6. Functionally, catalyzes the conversion of 1-hydroxy-2-methyl-2-(E)-butenyl 4-diphosphate (HMBPP) into a mixture of isopentenyl diphosphate (IPP) and dimethylallyl diphosphate (DMAPP). Acts in the terminal step of the DOXP/MEP pathway for isoprenoid precursor biosynthesis. In Bifidobacterium longum (strain NCC 2705), this protein is 4-hydroxy-3-methylbut-2-enyl diphosphate reductase.